Here is a 277-residue protein sequence, read N- to C-terminus: Putative ankyrin repeat protein L81 (277 aa).

2 ANK repeats span residues Phe-150–Gln-179 and Gln-183–Gln-215.

This is Putative ankyrin repeat protein L81 from Acanthamoeba polyphaga (Amoeba).